Reading from the N-terminus, the 689-residue chain is Shutoff protein (689 aa).

A disordered region spans residues 1-24 (MSEEPVSGTTVEIEEDTHTPPNSP). A binding to host EIF4G region spans residues 226-289 (VMNNLLVKRA…SVLVTVVLEC (64 aa)). Residues 292-410 (RLFTSKDMVK…PLYTETSQRL (119 aa)) enclose the RRM domain. Phosphotyrosine; by host is present on residues tyrosine 309 and tyrosine 627. A disordered region spans residues 625 to 689 (GQYLDPHTGE…GEPDVRGTTS (65 aa)). A compositionally biased stretch (basic and acidic residues) spans 645-655 (SGHEFQGDGRH). Residues 656 to 675 (REPKRGRHFRQRGGPRKPPR) are compositionally biased toward basic residues. Residues 678–689 (AGGEPDVRGTTS) are compositionally biased toward basic and acidic residues.

The protein belongs to the adenoviridae shutoff protein family. Monomer. Interacts with hexon protein; this interaction allows chaperoning and trimerization of hexon proteins. Interacts (via N-terminus) with host initiation factor EIF4G (via C-terminus). Interacts (via RRM domain) with viral mRNAs that contain the tripartite leader; this interaction allows ribosome shunting and expression of viral late mRNAs. In terms of processing, might be cleaved by the viral protease. Post-translationally, phosphorylated. Tyrosine phosphorylation enhances preferential binding to tripartite leader mRNAs and allows ribosome shunting. Methylated. Asymmetric dimethylation by host PRMT1 of the Arg/Gly-rich region may regulate shutoff protein binding to hexon and promote the capsid assembly in the nucleus.

Its subcellular location is the host cytoplasm. Protein that inhibits host translation while promoting late viral translation by ribosome shunting. Blocks host cap-dependent translation by binding to eIF4G, displacing MKNK1 from cap initiation complexes and preventing EIF4E phosphorylation. Binds to the tripartite leader sequence of viral late mRNAs and recruits host eIF4G, PABPC1/poly-A binding protein and 40S ribosomes subunits on viral mRNAs, allowing ribosome shunting and efficient translation of late viral mRNAs even though conventional translation via ribosome scanning from the cap has been shut off in the host cell. During assembly, acts as a chaperone protein that helps hexon proteins assembly into trimers. This chain is Shutoff protein, found in Canis lupus familiaris (Dog).